The chain runs to 457 residues: Siroheme synthase (457 aa).

The precorrin-2 dehydrogenase /sirohydrochlorin ferrochelatase stretch occupies residues 1–204 (MEIFPISLKL…DNLDIANQMM (204 aa)). Residues 22-23 (HI) and 43-44 (PD) contribute to the NAD(+) site. Ser129 carries the phosphoserine modification. The tract at residues 216–457 (GEVYLVGAGP…VSLREQLQWL (242 aa)) is uroporphyrinogen-III C-methyltransferase. Residue Pro225 participates in S-adenosyl-L-methionine binding. The active-site Proton acceptor is Asp248. The active-site Proton donor is the Lys270. S-adenosyl-L-methionine-binding positions include 301-303 (GGD), Ile306, 331-332 (TA), Met383, and Gly412.

It in the N-terminal section; belongs to the precorrin-2 dehydrogenase / sirohydrochlorin ferrochelatase family. This sequence in the C-terminal section; belongs to the precorrin methyltransferase family.

The catalysed reaction is uroporphyrinogen III + 2 S-adenosyl-L-methionine = precorrin-2 + 2 S-adenosyl-L-homocysteine + H(+). It catalyses the reaction precorrin-2 + NAD(+) = sirohydrochlorin + NADH + 2 H(+). The enzyme catalyses siroheme + 2 H(+) = sirohydrochlorin + Fe(2+). It participates in cofactor biosynthesis; adenosylcobalamin biosynthesis; precorrin-2 from uroporphyrinogen III: step 1/1. The protein operates within cofactor biosynthesis; adenosylcobalamin biosynthesis; sirohydrochlorin from precorrin-2: step 1/1. Its pathway is porphyrin-containing compound metabolism; siroheme biosynthesis; precorrin-2 from uroporphyrinogen III: step 1/1. It functions in the pathway porphyrin-containing compound metabolism; siroheme biosynthesis; siroheme from sirohydrochlorin: step 1/1. It participates in porphyrin-containing compound metabolism; siroheme biosynthesis; sirohydrochlorin from precorrin-2: step 1/1. Functionally, multifunctional enzyme that catalyzes the SAM-dependent methylations of uroporphyrinogen III at position C-2 and C-7 to form precorrin-2 via precorrin-1. Then it catalyzes the NAD-dependent ring dehydrogenation of precorrin-2 to yield sirohydrochlorin. Finally, it catalyzes the ferrochelation of sirohydrochlorin to yield siroheme. This chain is Siroheme synthase, found in Acinetobacter baylyi (strain ATCC 33305 / BD413 / ADP1).